Consider the following 451-residue polypeptide: Amino-acid acetyltransferase (451 aa).

In terms of domain architecture, N-acetyltransferase spans 305 to 451 (EYLREATLDD…RRSMVLMKKL (147 aa)).

This sequence belongs to the acetyltransferase family. ArgA subfamily.

Its subcellular location is the cytoplasm. It catalyses the reaction L-glutamate + acetyl-CoA = N-acetyl-L-glutamate + CoA + H(+). Its pathway is amino-acid biosynthesis; L-arginine biosynthesis; N(2)-acetyl-L-ornithine from L-glutamate: step 1/4. The chain is Amino-acid acetyltransferase (argA) from Ralstonia nicotianae (strain ATCC BAA-1114 / GMI1000) (Ralstonia solanacearum).